We begin with the raw amino-acid sequence, 491 residues long: Glutamyl-tRNA(Gln) amidotransferase subunit A (491 aa).

Active-site charge relay system residues include K79 and S154. Residue S178 is the Acyl-ester intermediate of the active site.

It belongs to the amidase family. GatA subfamily. As to quaternary structure, heterotrimer of A, B and C subunits.

The catalysed reaction is L-glutamyl-tRNA(Gln) + L-glutamine + ATP + H2O = L-glutaminyl-tRNA(Gln) + L-glutamate + ADP + phosphate + H(+). In terms of biological role, allows the formation of correctly charged Gln-tRNA(Gln) through the transamidation of misacylated Glu-tRNA(Gln) in organisms which lack glutaminyl-tRNA synthetase. The reaction takes place in the presence of glutamine and ATP through an activated gamma-phospho-Glu-tRNA(Gln). In Synechococcus sp. (strain CC9605), this protein is Glutamyl-tRNA(Gln) amidotransferase subunit A.